Consider the following 89-residue polypeptide: Small ribosomal subunit protein uS15 (89 aa).

The span at 1-10 shows a compositional bias: polar residues; that stretch reads MAVTTDQKSQ. Positions 1–22 are disordered; it reads MAVTTDQKSQVMRDYQRAAGDT.

This sequence belongs to the universal ribosomal protein uS15 family. In terms of assembly, part of the 30S ribosomal subunit. Forms a bridge to the 50S subunit in the 70S ribosome, contacting the 23S rRNA.

Functionally, one of the primary rRNA binding proteins, it binds directly to 16S rRNA where it helps nucleate assembly of the platform of the 30S subunit by binding and bridging several RNA helices of the 16S rRNA. Forms an intersubunit bridge (bridge B4) with the 23S rRNA of the 50S subunit in the ribosome. This Nitrosomonas europaea (strain ATCC 19718 / CIP 103999 / KCTC 2705 / NBRC 14298) protein is Small ribosomal subunit protein uS15.